A 242-amino-acid polypeptide reads, in one-letter code: Ribonuclease PH (242 aa).

Phosphate-binding positions include Arg-87 and 125-127 (STR).

The protein belongs to the RNase PH family. Homohexameric ring arranged as a trimer of dimers.

The enzyme catalyses tRNA(n+1) + phosphate = tRNA(n) + a ribonucleoside 5'-diphosphate. Its function is as follows. Phosphorolytic 3'-5' exoribonuclease that plays an important role in tRNA 3'-end maturation. Removes nucleotide residues following the 3'-CCA terminus of tRNAs; can also add nucleotides to the ends of RNA molecules by using nucleoside diphosphates as substrates, but this may not be physiologically important. Probably plays a role in initiation of 16S rRNA degradation (leading to ribosome degradation) during starvation. This chain is Ribonuclease PH, found in Synechococcus sp. (strain JA-3-3Ab) (Cyanobacteria bacterium Yellowstone A-Prime).